Here is a 566-residue protein sequence, read N- to C-terminus: Zinc finger protein 704 (566 aa).

Disordered stretches follow at residues 1 to 148, 166 to 203, and 253 to 324; these read MQAR…ARGA, DFRRDSSKKPSHHLFPLAMEEDVRTADTKKTSRVLDQE, and PLVR…DEAD. Positions 12 to 31 are enriched in low complexity; it reads LGSRRGGAAPAPAPEAAALG. Pro residues predominate over residues 32 to 55; it reads LPPPGPSPAAAPGSWRPPLPPPRG. Residues 56-72 show a composition bias toward low complexity; sequence TGPSRAAAASSPVLLLL. Residues 91–100 show a composition bias toward basic and acidic residues; sequence RVTEKPRGVA. Residues 101–128 show a composition bias toward acidic residues; that stretch reads EEEDDDEEEDEEVVVEVVDGDEDDEDAE. Residues 186–203 are compositionally biased toward basic and acidic residues; the sequence is EDVRTADTKKTSRVLDQE. Positions 267-290 are enriched in low complexity; sequence SGSWKEGAPSSSSSSGYWSWSAPS. The C2H2-type zinc finger occupies 346 to 371; sequence FKCLWKSCGKVLNTAAGIQKHIRAVH. Serine 378 and serine 381 each carry phosphoserine. Disordered stretches follow at residues 409 to 436 and 497 to 535; these read VSPSQSLASAPAFPIPDSSRTETPCAKT and PVSPPHHPTAGSGEQRQHAHTALSSPPRGTVTLRKPRGE. The sufficient for binding to RE2 sequence motifs stretch occupies residues 471–566; that stretch reads GSAKFTPNGS…WKKACQRFID (96 aa). The CR1 motif lies at 537-541; that stretch reads KKCRK. The CR2 signature appears at 555–559; the sequence is CRWKK.

It localises to the nucleus. In terms of biological role, transcription factor which binds to RE2 sequence elements in the MYOD1 enhancer. In Mus musculus (Mouse), this protein is Zinc finger protein 704.